Here is a 297-residue protein sequence, read N- to C-terminus: Homoserine kinase (297 aa).

82-92 (PVSRGLGSSAA) is a binding site for ATP.

The protein belongs to the GHMP kinase family. Homoserine kinase subfamily.

It is found in the cytoplasm. The catalysed reaction is L-homoserine + ATP = O-phospho-L-homoserine + ADP + H(+). It participates in amino-acid biosynthesis; L-threonine biosynthesis; L-threonine from L-aspartate: step 4/5. Its function is as follows. Catalyzes the ATP-dependent phosphorylation of L-homoserine to L-homoserine phosphate. In Clostridium botulinum (strain ATCC 19397 / Type A), this protein is Homoserine kinase.